A 700-amino-acid chain; its full sequence is Glycine--tRNA ligase beta subunit (700 aa).

It belongs to the class-II aminoacyl-tRNA synthetase family. In terms of assembly, tetramer of two alpha and two beta subunits.

Its subcellular location is the cytoplasm. The enzyme catalyses tRNA(Gly) + glycine + ATP = glycyl-tRNA(Gly) + AMP + diphosphate. The protein is Glycine--tRNA ligase beta subunit of Magnetococcus marinus (strain ATCC BAA-1437 / JCM 17883 / MC-1).